The primary structure comprises 321 residues: Secreted RxLR effector protein 71 (321 aa).

The signal sequence occupies residues 1 to 23 (MRPTGWRWPVLSLLLVLLPFQAA). Residues 84–87 (RSLR) carry the RxLR motif. Asn114 carries N-linked (GlcNAc...) asparagine glycosylation. Residues 210–237 (VSLGRDGNGPVRGISSSPTRLTRPRMGG) are disordered.

The protein belongs to the RxLR effector family.

Its subcellular location is the secreted. It is found in the host cell. In terms of biological role, secreted effector that partially suppresses the host cell death induced by cell death-inducing proteins. The chain is Secreted RxLR effector protein 71 from Plasmopara viticola (Downy mildew of grapevine).